Here is a 449-residue protein sequence, read N- to C-terminus: Phosphomethylpyrimidine synthase (449 aa).

Substrate is bound by residues Asn80, Met109, Tyr138, His173, 193-195, 234-237, and Glu273; these read SRG and DSLR. His277 lines the Zn(2+) pocket. Tyr300 provides a ligand contact to substrate. Position 341 (His341) interacts with Zn(2+). Positions 421, 424, and 429 each coordinate [4Fe-4S] cluster.

This sequence belongs to the ThiC family. In terms of assembly, homodimer. Requires [4Fe-4S] cluster as cofactor.

It carries out the reaction 5-amino-1-(5-phospho-beta-D-ribosyl)imidazole + S-adenosyl-L-methionine = 4-amino-2-methyl-5-(phosphooxymethyl)pyrimidine + CO + 5'-deoxyadenosine + formate + L-methionine + 3 H(+). It functions in the pathway cofactor biosynthesis; thiamine diphosphate biosynthesis. Catalyzes the synthesis of the hydroxymethylpyrimidine phosphate (HMP-P) moiety of thiamine from aminoimidazole ribotide (AIR) in a radical S-adenosyl-L-methionine (SAM)-dependent reaction. This is Phosphomethylpyrimidine synthase from Campylobacter hominis (strain ATCC BAA-381 / DSM 21671 / CCUG 45161 / LMG 19568 / NCTC 13146 / CH001A).